Reading from the N-terminus, the 530-residue chain is Bifunctional purine biosynthesis protein PurH (530 aa).

An MGS-like domain is found at 1-147; sequence MPSIKRALIS…KNWKHVAIVT (147 aa).

This sequence belongs to the PurH family.

The enzyme catalyses (6R)-10-formyltetrahydrofolate + 5-amino-1-(5-phospho-beta-D-ribosyl)imidazole-4-carboxamide = 5-formamido-1-(5-phospho-D-ribosyl)imidazole-4-carboxamide + (6S)-5,6,7,8-tetrahydrofolate. The catalysed reaction is IMP + H2O = 5-formamido-1-(5-phospho-D-ribosyl)imidazole-4-carboxamide. It participates in purine metabolism; IMP biosynthesis via de novo pathway; 5-formamido-1-(5-phospho-D-ribosyl)imidazole-4-carboxamide from 5-amino-1-(5-phospho-D-ribosyl)imidazole-4-carboxamide (10-formyl THF route): step 1/1. It functions in the pathway purine metabolism; IMP biosynthesis via de novo pathway; IMP from 5-formamido-1-(5-phospho-D-ribosyl)imidazole-4-carboxamide: step 1/1. The chain is Bifunctional purine biosynthesis protein PurH from Neisseria meningitidis serogroup A / serotype 4A (strain DSM 15465 / Z2491).